The sequence spans 75 residues: Small ribosomal subunit protein bS18 (75 aa).

The protein belongs to the bacterial ribosomal protein bS18 family. In terms of assembly, part of the 30S ribosomal subunit. Forms a tight heterodimer with protein bS6.

Its function is as follows. Binds as a heterodimer with protein bS6 to the central domain of the 16S rRNA, where it helps stabilize the platform of the 30S subunit. This chain is Small ribosomal subunit protein bS18, found in Shewanella halifaxensis (strain HAW-EB4).